The chain runs to 505 residues: Maturase K (505 aa).

This sequence belongs to the intron maturase 2 family. MatK subfamily.

The protein resides in the plastid. The protein localises to the chloroplast. Functionally, usually encoded in the trnK tRNA gene intron. Probably assists in splicing its own and other chloroplast group II introns. In Illicium oligandrum (Star anise), this protein is Maturase K.